We begin with the raw amino-acid sequence, 119 residues long: Large ribosomal subunit protein bL20 (119 aa).

Belongs to the bacterial ribosomal protein bL20 family.

Its function is as follows. Binds directly to 23S ribosomal RNA and is necessary for the in vitro assembly process of the 50S ribosomal subunit. It is not involved in the protein synthesizing functions of that subunit. The protein is Large ribosomal subunit protein bL20 of Thermoanaerobacter pseudethanolicus (strain ATCC 33223 / 39E) (Clostridium thermohydrosulfuricum).